Here is a 115-residue protein sequence, read N- to C-terminus: uncharacterized protein (115 aa).

The disordered stretch occupies residues 1 to 86; that stretch reads RRPARSGGDG…LSSQLVRPSR (86 aa).

This is an uncharacterized protein from Homo sapiens (Human).